Reading from the N-terminus, the 494-residue chain is Ubiquitin carboxyl-terminal hydrolase 27 (494 aa).

A helical membrane pass occupies residues 30–50 (LSFAGLLGVAGFVFAQQHGLF). The 421-residue stretch at 74-494 (PGLQNLGNNC…EASLLFYERL (421 aa)) folds into the USP domain. The active-site Nucleophile is C83. H440 serves as the catalytic Proton acceptor.

The protein belongs to the peptidase C19 family.

It is found in the membrane. It catalyses the reaction Thiol-dependent hydrolysis of ester, thioester, amide, peptide and isopeptide bonds formed by the C-terminal Gly of ubiquitin (a 76-residue protein attached to proteins as an intracellular targeting signal).. Recognizes and hydrolyzes the peptide bond at the C-terminal Gly of ubiquitin. Involved in the processing of poly-ubiquitin precursors as well as that of ubiquitinated proteins. This is Ubiquitin carboxyl-terminal hydrolase 27 (UBP27) from Arabidopsis thaliana (Mouse-ear cress).